Reading from the N-terminus, the 176-residue chain is Large ribosomal subunit protein uL22z (176 aa).

A compositionally biased stretch (basic and acidic residues) spans 154 to 163; sequence KEEPVKKEPE. The disordered stretch occupies residues 154 to 176; that stretch reads KEEPVKKEPETQLAAKSKKGASS.

It belongs to the universal ribosomal protein uL22 family.

In Arabidopsis thaliana (Mouse-ear cress), this protein is Large ribosomal subunit protein uL22z (RPL17A).